We begin with the raw amino-acid sequence, 176 residues long: 3-hydroxydecanoyl-[acyl-carrier-protein] dehydratase (176 aa).

His71 is an active-site residue.

This sequence belongs to the thioester dehydratase family. FabA subfamily. In terms of assembly, homodimer.

It is found in the cytoplasm. It carries out the reaction a (3R)-hydroxyacyl-[ACP] = a (2E)-enoyl-[ACP] + H2O. It catalyses the reaction (3R)-hydroxydecanoyl-[ACP] = (2E)-decenoyl-[ACP] + H2O. The catalysed reaction is (2E)-decenoyl-[ACP] = (3Z)-decenoyl-[ACP]. It participates in lipid metabolism; fatty acid biosynthesis. Functionally, necessary for the introduction of cis unsaturation into fatty acids. Catalyzes the dehydration of (3R)-3-hydroxydecanoyl-ACP to E-(2)-decenoyl-ACP and then its isomerization to Z-(3)-decenoyl-ACP. Can catalyze the dehydratase reaction for beta-hydroxyacyl-ACPs with saturated chain lengths up to 16:0, being most active on intermediate chain length. The polypeptide is 3-hydroxydecanoyl-[acyl-carrier-protein] dehydratase (Rhodopseudomonas palustris (strain HaA2)).